A 433-amino-acid chain; its full sequence is Anthranilate synthase component 1 (433 aa).

Residues Ser29 and 219-221 contribute to the L-tryptophan site; that span reads PYT. Chorismate is bound at residue 253–254; the sequence is GT. Glu280 contributes to the Mg(2+) binding site. Chorismate is bound by residues Tyr368, Arg388, 402–404, and Gly404; that span reads GAG. Glu417 is a binding site for Mg(2+).

The protein belongs to the anthranilate synthase component I family. In terms of assembly, heterotetramer consisting of two non-identical subunits: a beta subunit (TrpG) and a large alpha subunit (TrpE). Mg(2+) serves as cofactor.

It catalyses the reaction chorismate + L-glutamine = anthranilate + pyruvate + L-glutamate + H(+). Its pathway is amino-acid biosynthesis; L-tryptophan biosynthesis; L-tryptophan from chorismate: step 1/5. With respect to regulation, feedback inhibited by tryptophan. Its function is as follows. Part of a heterotetrameric complex that catalyzes the two-step biosynthesis of anthranilate, an intermediate in the biosynthesis of L-tryptophan. In the first step, the glutamine-binding beta subunit (TrpG) of anthranilate synthase (AS) provides the glutamine amidotransferase activity which generates ammonia as a substrate that, along with chorismate, is used in the second step, catalyzed by the large alpha subunit of AS (TrpE) to produce anthranilate. In the absence of TrpG, TrpE can synthesize anthranilate directly from chorismate and high concentrations of ammonia. The protein is Anthranilate synthase component 1 (trpE) of Thermococcus kodakarensis (strain ATCC BAA-918 / JCM 12380 / KOD1) (Pyrococcus kodakaraensis (strain KOD1)).